We begin with the raw amino-acid sequence, 327 residues long: MAAVVEVEVGGGAAGERELDEVDMSDLSPEEQWRVEHARMHAKHRGHEAMHAEMVLILIATLVVAQLLLVQWKQRHPRSYNMVTLFQMWVVPLYFTVKLHWWRFLVIWILFSAVTAFVTFRATRKPLVQTTPRLVYKWFLLIYKISYATGIVGYMAVMFTLFGLNLLFKIKPEDAMDFGISLLFYGLYYGVLERDFAEMCADYMASTIGFYSESGMPTKHLSDSVCAVCGQQIFVDVSEEGIIENTYRLSCNHVFHEFCIRGWCIVGKKQTCPYCKEKVDLKRMFSNPWERPHVMYGQLLDWLRYLVAWQPVIIGVVQGINYILGLE.

Ala2 bears the N-acetylalanine mark. Helical transmembrane passes span 50–70 (MHAE…LLLV), 79–99 (SYNM…TVKL), 100–120 (HWWR…FVTF), 148–168 (ATGI…NLLF), and 172–192 (PEDA…YGVL). The RING-type; atypical zinc-finger motif lies at 226-276 (CAVCGQQIFVDVSEEGIIENTYRLSCNHVFHEFCIRGWCIVGKKQTCPYCK). The chain crosses the membrane as a helical span at residues 306–326 (LVAWQPVIIGVVQGINYILGL).

Belongs to the RNF121 family.

It localises to the endoplasmic reticulum membrane. The catalysed reaction is S-ubiquitinyl-[E2 ubiquitin-conjugating enzyme]-L-cysteine + [acceptor protein]-L-lysine = [E2 ubiquitin-conjugating enzyme]-L-cysteine + N(6)-ubiquitinyl-[acceptor protein]-L-lysine.. It functions in the pathway protein modification; protein ubiquitination. E3 ubiquitin ligase which accepts ubiquitin and transfers it to substrates thereby promoting their degradation by the endoplasmic reticulum-associated degradation (ERAD) pathway which is a pathway involved in ubiquitin-dependent degradation of misfolded endoplasmic reticulum proteins. May regulate the unfolded protein response to reduce endoplasmic reticulum stress. The sequence is that of E3 ubiquitin ligase RNF121 (RNF121) from Homo sapiens (Human).